A 778-amino-acid polypeptide reads, in one-letter code: MSFVIAVPEALTMAASDLANIGSTINAANAAAALPTTGVVAAAADEVSAALAALFGSYAQSYHAFGAQLSAFHAQFVQSLTNGARSYVVAEATSAAPLQDLLGVVNAPAQALLGRPLIGNGANGADGTGAPGGPGGLLLGNGGNGGSGAPGQPGGAGGDAGLIGNGGTGGKGGDGLVGSGAAGGVGGRGGWLLGNGGTGGAGGAAGATLVGGTGGVGGATGLIGSGGFGGAGGAAAGVGTTGGVGGSGGVGGVFGNGGFGGAGGLGAAGGVGGTASYFGTGGGGGVGGDGAPGGDGGAGPLLIGNGGVGGLGGAGAAGGNGGAGGMLLGDGGAGGQGGPAVAGVLGGMPGAGGNGGNANWFGSGGAGGQGGTGLAGTNGVNPGSIANPNTGANGTDNSGNGNQTGGNGGPGPAGGVGEAGGVGGQGGLGESLDGNDGTGGKGGAGGTAGTDGGAGGAGGAGGIGETDGSAGGVATGGEGGDGATGGVDGGVGGAGGKGGQGHNTGVGDAFGGDGGIGGDGNGALGAAGGNGGTGGAGGNGGRGGMLIGNGGAGGAGGTGGTGGGGAAGFAGGVGGAGGEGLTDGAGTAEGGTGGLGGLGGVGGTGGMGGSGGVGGNGGAAGSLIGLGGGGGAGGVGGTGGIGGIGGAGGNGGAGGAGTTTGGGATIGGGGGTGGVGGAGGTGGTGGAGGTTGGSGGAGGLIGWAGAAGGTGAGGTGGQGGLGGQGGNGGNGGTGATGGQGGDFALGGNGGAGGAGGSPGGSSGIQGNMGPPGTQGADG.

The region spanning 1–92 (MSFVIAVPEA…GARSYVVAEA (92 aa)) is the PE domain. 3 disordered regions span residues 125–163 (ADGTGAPGGPGGLLLGNGGNGGSGAPGQPGGAGGDAGLI), 372–510 (TGLA…GDAF), and 718–778 (QGGL…GADG). 3 stretches are compositionally biased toward gly residues: residues 402-429 (NQTGGNGGPGPAGGVGEAGGVGGQGGLG), 436-510 (DGTG…GDAF), and 718-763 (QGGL…GSSG).

It belongs to the mycobacterial PE family. PGRS subfamily.

This is an uncharacterized protein from Mycobacterium tuberculosis (strain CDC 1551 / Oshkosh).